The chain runs to 629 residues: Arginine--tRNA ligase (629 aa).

Positions 128–138 (VNPTKPLHMGH) match the 'HIGH' region motif.

It belongs to the class-I aminoacyl-tRNA synthetase family.

It localises to the cytoplasm. The catalysed reaction is tRNA(Arg) + L-arginine + ATP = L-arginyl-tRNA(Arg) + AMP + diphosphate. In Pyrococcus horikoshii (strain ATCC 700860 / DSM 12428 / JCM 9974 / NBRC 100139 / OT-3), this protein is Arginine--tRNA ligase (argS).